A 488-amino-acid polypeptide reads, in one-letter code: GTPase Der (488 aa).

2 EngA-type G domains span residues 3-166 (PVVA…AEAM) and 200-373 (IKLA…DSAT). Residues 9–16 (GRPNVGKS), 56–60 (DTGGI), 118–121 (NKVD), 206–213 (GKPNVGKS), 253–257 (DTAGV), and 318–321 (NKWD) contribute to the GTP site. The 85-residue stretch at 374–458 (RRVSTSMLTR…PIQLRFHEGD (85 aa)) folds into the KH-like domain.

The protein belongs to the TRAFAC class TrmE-Era-EngA-EngB-Septin-like GTPase superfamily. EngA (Der) GTPase family. In terms of assembly, associates with the 50S ribosomal subunit.

GTPase that plays an essential role in the late steps of ribosome biogenesis. This chain is GTPase Der, found in Shewanella amazonensis (strain ATCC BAA-1098 / SB2B).